The chain runs to 533 residues: CTP synthase (533 aa).

Residues 1-265 (MTKFIFVTGG…PAYLARRLGL (265 aa)) form an amidoligase domain region. CTP is bound at residue serine 13. Serine 13 lines the UTP pocket. 14–19 (GLGKGI) contacts ATP. An L-glutamine-binding site is contributed by tyrosine 54. Aspartate 71 serves as a coordination point for ATP. Residues aspartate 71 and glutamate 139 each contribute to the Mg(2+) site. CTP contacts are provided by residues 146–148 (DIE), 186–191 (KTKPTQ), and lysine 222. UTP-binding positions include 186–191 (KTKPTQ) and lysine 222. The 243-residue stretch at 290–532 (EIAIVGKYVK…VEAAKKKKYG (243 aa)) folds into the Glutamine amidotransferase type-1 domain. Residue glycine 351 participates in L-glutamine binding. Cysteine 378 (nucleophile; for glutamine hydrolysis) is an active-site residue. L-glutamine contacts are provided by residues 379 to 382 (FGFQ), glutamate 402, and arginine 459. Residues histidine 505 and glutamate 507 contribute to the active site.

The protein belongs to the CTP synthase family. Homotetramer.

It carries out the reaction UTP + L-glutamine + ATP + H2O = CTP + L-glutamate + ADP + phosphate + 2 H(+). It catalyses the reaction L-glutamine + H2O = L-glutamate + NH4(+). The catalysed reaction is UTP + NH4(+) + ATP = CTP + ADP + phosphate + 2 H(+). The protein operates within pyrimidine metabolism; CTP biosynthesis via de novo pathway; CTP from UDP: step 2/2. Allosterically activated by GTP, when glutamine is the substrate; GTP has no effect on the reaction when ammonia is the substrate. The allosteric effector GTP functions by stabilizing the protein conformation that binds the tetrahedral intermediate(s) formed during glutamine hydrolysis. Inhibited by the product CTP, via allosteric rather than competitive inhibition. Functionally, catalyzes the ATP-dependent amination of UTP to CTP with either L-glutamine or ammonia as the source of nitrogen. Regulates intracellular CTP levels through interactions with the four ribonucleotide triphosphates. The protein is CTP synthase of Thermococcus kodakarensis (strain ATCC BAA-918 / JCM 12380 / KOD1) (Pyrococcus kodakaraensis (strain KOD1)).